The primary structure comprises 160 residues: Cytochrome b6-f complex subunit 4 (160 aa).

The next 3 membrane-spanning stretches (helical) occupy residues 36 to 56, 95 to 115, and 131 to 151; these read LLYIFPVVILGTIACNVGLAV, LLGVLLMVSVPTGLLTVPFLE, and TVFLIGTAVALWLGIGATLPI.

Belongs to the cytochrome b family. PetD subfamily. In terms of assembly, the 4 large subunits of the cytochrome b6-f complex are cytochrome b6, subunit IV (17 kDa polypeptide, petD), cytochrome f and the Rieske protein, while the 4 small subunits are petG, petL, petM and petN. The complex functions as a dimer.

Its subcellular location is the plastid. The protein resides in the chloroplast thylakoid membrane. Functionally, component of the cytochrome b6-f complex, which mediates electron transfer between photosystem II (PSII) and photosystem I (PSI), cyclic electron flow around PSI, and state transitions. The protein is Cytochrome b6-f complex subunit 4 of Oryza sativa (Rice).